The following is a 540-amino-acid chain: MTFIIKKVKNIFSTKKINNKTNNNNFKNENLNIKNEILNNNNNNNNNKNNNNNNNNNNNIENNSKNENFNNFNKIHNSPISSPNLSPSLNSIDSINLNKIIIQNIDNFETNGNILNTSSPSLNSSVAKNNFIISDIQDIDWNNLVNIELLNNNINNNNNTNNNNNNNIIILVTFYNGYDDFNQVILKSSNTMVQDVYASVLQVILKYPVPEMRLIDSCEEEFNKMSINLLKQSKLQSEQLFNIIQTQIEKPFFLIMEYKNGGKFFSQLNHKEYFSSQKNGEKKLKQLGKLLSFDLICNINNNICNFNYNNCNNNNNNNNNNNNNNNNNNNNNNNNNNINNCNNNNNNNISLNNSNNNLNSIFNNNNFNIFSNIIFYEQPDKNGWYFGIIHSSILCLNSSSFTPGYRNTMDRIKLLLFSIFQNPTTESLQIYHFRKYLSNNCNINLPSSSVHWSTNIQNGIAKGIDELVNSLNYQVFASTKQIVNNMIFSTTDQNNNNVIINNNNSFTWKKGIDLIYIPFLFDVLKEIIIEHSNYKNKSKK.

The stretch at 27–68 (KNENLNIKNEILNNNNNNNNNKNNNNNNNNNNNIENNSKNEN) forms a coiled coil. 2 disordered regions span residues 37-70 (ILNNNNNNNNNKNNNNNNNNNNNIENNSKNENFN) and 317-341 (NNNNNNNNNNNNNNNNNNNNNINNC).

The protein belongs to the protein kinase superfamily. AFK Ser/Thr protein kinase family.

The chain is Putative actin-fragmin kinase DDB_G0287957 from Dictyostelium discoideum (Social amoeba).